Consider the following 84-residue polypeptide: uncharacterized protein (84 aa).

The chain crosses the membrane as a helical span at residues 7 to 23 (AFSGVIALYGGYLYLRL).

It is found in the membrane. This is an uncharacterized protein from Haemophilus influenzae (strain ATCC 51907 / DSM 11121 / KW20 / Rd).